An 875-amino-acid chain; its full sequence is Alanine--tRNA ligase (875 aa).

Zn(2+) contacts are provided by H564, H568, C666, and H670.

Belongs to the class-II aminoacyl-tRNA synthetase family. It depends on Zn(2+) as a cofactor.

It is found in the cytoplasm. It catalyses the reaction tRNA(Ala) + L-alanine + ATP = L-alanyl-tRNA(Ala) + AMP + diphosphate. Its function is as follows. Catalyzes the attachment of alanine to tRNA(Ala) in a two-step reaction: alanine is first activated by ATP to form Ala-AMP and then transferred to the acceptor end of tRNA(Ala). Also edits incorrectly charged Ser-tRNA(Ala) and Gly-tRNA(Ala) via its editing domain. In Mannheimia succiniciproducens (strain KCTC 0769BP / MBEL55E), this protein is Alanine--tRNA ligase.